A 448-amino-acid polypeptide reads, in one-letter code: Probable glycine dehydrogenase (decarboxylating) subunit 1 (448 aa).

The protein belongs to the GcvP family. N-terminal subunit subfamily. In terms of assembly, the glycine cleavage system is composed of four proteins: P, T, L and H. In this organism, the P 'protein' is a heterodimer of two subunits.

The catalysed reaction is N(6)-[(R)-lipoyl]-L-lysyl-[glycine-cleavage complex H protein] + glycine + H(+) = N(6)-[(R)-S(8)-aminomethyldihydrolipoyl]-L-lysyl-[glycine-cleavage complex H protein] + CO2. The glycine cleavage system catalyzes the degradation of glycine. The P protein binds the alpha-amino group of glycine through its pyridoxal phosphate cofactor; CO(2) is released and the remaining methylamine moiety is then transferred to the lipoamide cofactor of the H protein. The protein is Probable glycine dehydrogenase (decarboxylating) subunit 1 of Parvibaculum lavamentivorans (strain DS-1 / DSM 13023 / NCIMB 13966).